A 196-amino-acid chain; its full sequence is Ribosome maturation factor RimP (196 aa).

The interval 164–196 is disordered; that stretch reads LAPQKPNKPGPKKPGHEKKKPSNESAAGKPRAE. The span at 173–182 shows a compositional bias: basic residues; it reads GPKKPGHEKK.

This sequence belongs to the RimP family.

It localises to the cytoplasm. Its function is as follows. Required for maturation of 30S ribosomal subunits. This Xanthomonas euvesicatoria pv. vesicatoria (strain 85-10) (Xanthomonas campestris pv. vesicatoria) protein is Ribosome maturation factor RimP.